The following is a 780-amino-acid chain: Protein SAV (780 aa).

ATP contacts are provided by residues 253–260 and 528–535; these read GPPGTGKT.

This sequence belongs to the AAA ATPase family. CDC48 subfamily.

Functionally, not yet known, shows ATPase activity. The chain is Protein SAV (sav) from Sulfolobus acidocaldarius (strain ATCC 33909 / DSM 639 / JCM 8929 / NBRC 15157 / NCIMB 11770).